The sequence spans 189 residues: Threonylcarbamoyl-AMP synthase (189 aa).

The region spanning 9–189 (ASAQRKLSVY…IDGETGKRLR (181 aa)) is the YrdC-like domain.

It belongs to the SUA5 family. TsaC subfamily.

Its subcellular location is the cytoplasm. It carries out the reaction L-threonine + hydrogencarbonate + ATP = L-threonylcarbamoyladenylate + diphosphate + H2O. Required for the formation of a threonylcarbamoyl group on adenosine at position 37 (t(6)A37) in tRNAs that read codons beginning with adenine. Catalyzes the conversion of L-threonine, HCO(3)(-)/CO(2) and ATP to give threonylcarbamoyl-AMP (TC-AMP) as the acyladenylate intermediate, with the release of diphosphate. This chain is Threonylcarbamoyl-AMP synthase, found in Neisseria gonorrhoeae (strain ATCC 700825 / FA 1090).